Reading from the N-terminus, the 2527-residue chain is Highly reducing polyketide synthase poxF (2527 aa).

Residues 20–445 (VMPIAIIGMA…GANAHVIVES (426 aa)) form the Ketosynthase family 3 (KS3) domain. Catalysis depends on for beta-ketoacyl synthase activity residues C193, H328, and H368. Residues 560-882 (VFTGQGAQWF…TYASCLSRGQ (323 aa)) are malonyl-CoA:ACP transacylase (MAT) domain. The segment at 951–1086 (HDLLGVPAAG…GLCCTPSPAQ (136 aa)) is N-terminal hotdog fold. The interval 951-1243 (HDLLGVPAAG…SVRVINNAGT (293 aa)) is dehydratase (DH) domain. One can recognise a PKS/mFAS DH domain in the interval 951 to 1270 (HDLLGVPAAG…CQSLGSSAVV (320 aa)). The active-site Proton acceptor; for dehydratase activity is the H983. The C-terminal hotdog fold stretch occupies residues 1108–1270 (AWRILNPADT…CQSLGSSAVV (163 aa)). The active-site Proton donor; for dehydratase activity is D1174. Positions 1406 to 1587 (EDQAEWSSVS…RLLAKAGFEP (182 aa)) are methyltransferase (CMet) domain. The tract at residues 1823–2137 (GLLNSLVFTE…TGKHMGKIVL (315 aa)) is enoyl reductase (ER) (ER) domain. The segment at 2162-2339 (TYLLVGGVGG…AVSIDLGMVS (178 aa)) is ketoreductase (KR) domain. The Carrier domain occupies 2445-2522 (EVTTLIQSAL…GLAGQMAKKS (78 aa)). The residue at position 2482 (S2482) is an O-(pantetheine 4'-phosphoryl)serine.

It participates in secondary metabolite biosynthesis. Its function is as follows. Highly reducing polyketide synthase; part of the gene cluster that mediates the biosynthesis of oxaleimides, cytotoxic compounds containing an unusual disubstituted succinimide moiety. The first step of the pathway is provided by the HR-PKS poxF that serves in a new mode of collaborative biosynthesis with the PKS-NRPS poxE, by providing the olefin containing amino acid substrate via the synthesis of an ACP-bound dec-4-enoate. The cytochrome P450 monooxygenase poxM-catalyzed oxidation at the alpha-position creates the enzyme-bound 2-hydroxydec-4-enoyl-ACP thioester, which may be prone to spontaneous hydrolysis to yield 2-hydroxydec-4-enoic acid due to increased electrophilicity of the carbonyl. 2-hydroxydec-4-enoic acid can then be further oxidized by poxM to yield the alpha-ketoacid 2-oxodec-4-enoicacid, which is reductively aminated by the aminotransferase poxL to yield (S,E)-2-aminodec-4-enoic acid. The Hybrid PKS-NRPS synthetase poxE then performs condensation between the octaketide product of its PKS modules and the amino group of (S,E)-2-aminodec-4-enoic acid which is activated and incorporated by the adenylation domain. The resulting aminoacyl product can be cyclized by the Diels-Alderase PoxQ and reductively released by the reductive (R) domain of poxE to yield an aldehyde intermediate. The released aldehyde is then substrate for a Knoevenagel condensation by the hydrolyase poxO followed by an oxidation at the 5-position of the pyrrolidone ring. The presence of the olefin from the amino acid building block allows for migration of the substituted allyl group to occur. This allylic transposition reaction takes place in a conjugate addition, semipinacol-like fashion to yield a succinimide intermediate. Iterative two-electron oxidations of the C7 methyl of the succinimide intermediate to the carboxylic acid can be catalyzed by one of two remaining cytochrome P450 monooxygenasess poxC or poxD to yield oxaleimide A. Subsequent oxidation yields the maleimide scaffold oxaleimide I. Both oxaleimide A and oxaleimide I can undergo oxidative modifications in the decalin ring to yield the series of products oxaleimides B to H. The chain is Highly reducing polyketide synthase poxF from Penicillium oxalicum.